Here is a 198-residue protein sequence, read N- to C-terminus: Transmembrane gamma-carboxyglutamic acid protein 2 (198 aa).

Positions 1-17 (MRGRPSLLLVYMGLATC) are cleaved as a signal peptide. A propeptide spanning residues 18–51 (LDTSPHREQNQVLDIFLDAPEAQSFLVGRRRFPR) is cleaved from the precursor. The Gla domain maps to 52–98 (ANHWDLELLTPGNLERECLEERCSWEEAREYFEDNTLTERFWESYTY). Topologically, residues 52-111 (ANHWDLELLTPGNLERECLEERCSWEEAREYFEDNTLTERFWESYTYNGKGGRGRVDVAG) are extracellular. A disulfide bond links cysteine 69 and cysteine 74. 4-carboxyglutamate is present on glutamate 72. A helical membrane pass occupies residues 112–132 (LAVGLTSGILLIVLAGLGAFW). At 133–198 (YLHYRRRRLR…PPYSSLRRPH (66 aa)) the chain is on the cytoplasmic side. The tract at residues 156–198 (PLSPQTPQSPPLPPGLPTYEQALAASGVHDAPPPPYSSLRRPH) is disordered. Positions 162–171 (PQSPPLPPGL) are enriched in pro residues. Positions 171–174 (LPTY) match the LPXY motif; mediates binding to WW domain-containing proteins motif. The short motif at 188 to 191 (PPPY) is the PPXY motif; mediates binding to WW domain-containing proteins element.

In terms of assembly, interacts with NEDD4. Interacts with transcriptional coactivator YAP1. Gamma-carboxyglutamate residues are formed by vitamin K dependent carboxylation. These residues are essential for the binding of calcium.

The protein resides in the cell membrane. This chain is Transmembrane gamma-carboxyglutamic acid protein 2 (Prrg2), found in Mus musculus (Mouse).